The chain runs to 196 residues: DnaA initiator-associating protein DiaA (196 aa).

In terms of domain architecture, SIS spans 34 to 196 (LVQSLLNGNK…DNTLFPHQDV (163 aa)).

Belongs to the SIS family. DiaA subfamily. In terms of assembly, homotetramer; dimer of dimers.

Its function is as follows. Required for the timely initiation of chromosomal replication via direct interactions with the DnaA initiator protein. This is DnaA initiator-associating protein DiaA from Escherichia coli O6:K15:H31 (strain 536 / UPEC).